A 157-amino-acid chain; its full sequence is SsrA-binding protein (157 aa).

Belongs to the SmpB family.

It is found in the cytoplasm. In terms of biological role, required for rescue of stalled ribosomes mediated by trans-translation. Binds to transfer-messenger RNA (tmRNA), required for stable association of tmRNA with ribosomes. tmRNA and SmpB together mimic tRNA shape, replacing the anticodon stem-loop with SmpB. tmRNA is encoded by the ssrA gene; the 2 termini fold to resemble tRNA(Ala) and it encodes a 'tag peptide', a short internal open reading frame. During trans-translation Ala-aminoacylated tmRNA acts like a tRNA, entering the A-site of stalled ribosomes, displacing the stalled mRNA. The ribosome then switches to translate the ORF on the tmRNA; the nascent peptide is terminated with the 'tag peptide' encoded by the tmRNA and targeted for degradation. The ribosome is freed to recommence translation, which seems to be the essential function of trans-translation. The protein is SsrA-binding protein of Lacticaseibacillus paracasei (strain ATCC 334 / BCRC 17002 / CCUG 31169 / CIP 107868 / KCTC 3260 / NRRL B-441) (Lactobacillus paracasei).